Reading from the N-terminus, the 456-residue chain is tRNA(Ile)-lysidine synthase (456 aa).

Ser28–Ser33 is a binding site for ATP.

The protein belongs to the tRNA(Ile)-lysidine synthase family.

Its subcellular location is the cytoplasm. It catalyses the reaction cytidine(34) in tRNA(Ile2) + L-lysine + ATP = lysidine(34) in tRNA(Ile2) + AMP + diphosphate + H(+). Its function is as follows. Ligates lysine onto the cytidine present at position 34 of the AUA codon-specific tRNA(Ile) that contains the anticodon CAU, in an ATP-dependent manner. Cytidine is converted to lysidine, thus changing the amino acid specificity of the tRNA from methionine to isoleucine. The sequence is that of tRNA(Ile)-lysidine synthase from Brucella anthropi (strain ATCC 49188 / DSM 6882 / CCUG 24695 / JCM 21032 / LMG 3331 / NBRC 15819 / NCTC 12168 / Alc 37) (Ochrobactrum anthropi).